The sequence spans 211 residues: Large ribosomal subunit protein uL3 (211 aa).

The protein belongs to the universal ribosomal protein uL3 family. In terms of assembly, part of the 50S ribosomal subunit. Forms a cluster with proteins L14 and L19.

Functionally, one of the primary rRNA binding proteins, it binds directly near the 3'-end of the 23S rRNA, where it nucleates assembly of the 50S subunit. The chain is Large ribosomal subunit protein uL3 from Geobacter sp. (strain M21).